Reading from the N-terminus, the 91-residue chain is Acylphosphatase (91 aa).

An Acylphosphatase-like domain is found at 6–91; sequence CMRCYISGRV…WEDYISFDVL (86 aa). Active-site residues include arginine 21 and asparagine 39.

It belongs to the acylphosphatase family.

It catalyses the reaction an acyl phosphate + H2O = a carboxylate + phosphate + H(+). This Legionella pneumophila (strain Corby) protein is Acylphosphatase (acyP).